Here is a 1630-residue protein sequence, read N- to C-terminus: Histone transcription regulator 3 homolog (1630 aa).

Residues 8 to 42 (NAASEDLDKEKRTLEIRIEEAVQIYQNALSAQKQG) form a TPR 1 repeat. Residues 325–347 (KDIVPPPSDNLPKPQLLKRPIDD) form a disordered region. The TPR 2 repeat unit spans residues 1230–1263 (WRALYMLGKACRKCGDMENALVHFEAAAALAPTK).

The protein belongs to the HIR3 family. As to quaternary structure, interacts with hip1 and slm9.

It is found in the nucleus. In terms of biological role, has a role in a nucleosome assembly pathway that is required for the integrity of heterochromatin and proper chromosome segregation. Required for transcriptional silencing in the outer repeat (otr) region of centromeric repeats and the Tf2 long terminal repeat retrotransposons. The sequence is that of Histone transcription regulator 3 homolog (hip3) from Schizosaccharomyces pombe (strain 972 / ATCC 24843) (Fission yeast).